A 178-amino-acid chain; its full sequence is GTP-dependent dephospho-CoA kinase (178 aa).

GTP is bound by residues D55, V57, D74, K76, and E127.

The protein belongs to the GTP-dependent DPCK family.

The catalysed reaction is 3'-dephospho-CoA + GTP = GDP + CoA + H(+). It participates in cofactor biosynthesis; coenzyme A biosynthesis. Catalyzes the GTP-dependent phosphorylation of the 3'-hydroxyl group of dephosphocoenzyme A to form coenzyme A (CoA). The sequence is that of GTP-dependent dephospho-CoA kinase from Saccharolobus islandicus (strain Y.G.57.14 / Yellowstone #1) (Sulfolobus islandicus).